The sequence spans 266 residues: MRILLTNDDGIYSNGLRAAVKALSELGEVYVVAPLFQRSASGRAMTLHRPIRAKRVDVPGARIAYGIDGTPTDCVIFAIARFGSFDLAVSGINLGENLSTEITVSGTASAAIEASTHGIPSIAVSLEVDWKKTLGEGEGVDFSVSAHFLRRIAGAVLERGLPEGVDMLNVNVPSDATEDTKMAITRLARKRYSPTVEERIDPKGNPYYWIVGRLVQDFEPGTDAYALKVERKVSVTPINIDMTARVDFEKLKNVLFGESLQTGRTY.

A divalent metal cation is bound by residues Asp8, Asp9, Ser39, and Asn93.

It belongs to the SurE nucleotidase family. A divalent metal cation is required as a cofactor.

Its subcellular location is the cytoplasm. The enzyme catalyses a ribonucleoside 5'-phosphate + H2O = a ribonucleoside + phosphate. In terms of biological role, nucleotidase that shows phosphatase activity on nucleoside 5'-monophosphates. This chain is 5'-nucleotidase SurE, found in Thermococcus gammatolerans (strain DSM 15229 / JCM 11827 / EJ3).